The primary structure comprises 325 residues: Phosphate acyltransferase (325 aa).

This sequence belongs to the PlsX family. As to quaternary structure, homodimer. Probably interacts with PlsY.

The protein localises to the cytoplasm. The enzyme catalyses a fatty acyl-[ACP] + phosphate = an acyl phosphate + holo-[ACP]. The protein operates within lipid metabolism; phospholipid metabolism. Its function is as follows. Catalyzes the reversible formation of acyl-phosphate (acyl-PO(4)) from acyl-[acyl-carrier-protein] (acyl-ACP). This enzyme utilizes acyl-ACP as fatty acyl donor, but not acyl-CoA. The polypeptide is Phosphate acyltransferase (Staphylococcus epidermidis (strain ATCC 35984 / DSM 28319 / BCRC 17069 / CCUG 31568 / BM 3577 / RP62A)).